Here is an 809-residue protein sequence, read N- to C-terminus: ATP-dependent zinc metalloprotease FTSH 3, mitochondrial (809 aa).

The N-terminal 83 residues, 1–83 (MTMIFFSKLN…FANPRLRRFF (83 aa)), are a transit peptide targeting the mitochondrion. Over residues 93-121 (YENYFPKDKQEPKSDQKSEHKEGSEKNEN) the composition is skewed to basic and acidic residues. Residues 93-122 (YENYFPKDKQEPKSDQKSEHKEGSEKNENE) form a disordered region. A helical membrane pass occupies residues 132–152 (FQNLLIPLLALAVFFSTFSFG). 362–369 (GPPGTGKT) serves as a coordination point for ATP. Histidine 586 provides a ligand contact to Zn(2+). Residue glutamate 587 is part of the active site. Residues histidine 590 and aspartate 662 each coordinate Zn(2+). Residues 776 to 809 (GFEETEKDSAATPTVEPVVDDGAPPPFEPQVVPT) are disordered.

The protein in the N-terminal section; belongs to the AAA ATPase family. In the C-terminal section; belongs to the peptidase M41 family. Requires Zn(2+) as cofactor.

It is found in the mitochondrion inner membrane. Probable ATP-dependent zinc metallopeptidase. Involved in the assembly and/or stability of the complexes I and V of the mitochondrial oxidative phosphorylation system. This chain is ATP-dependent zinc metalloprotease FTSH 3, mitochondrial (FTSH3), found in Arabidopsis thaliana (Mouse-ear cress).